We begin with the raw amino-acid sequence, 486 residues long: Glutamyl-tRNA(Gln) amidotransferase subunit A (486 aa).

Catalysis depends on charge relay system residues Lys78 and Ser153. Catalysis depends on Ser177, which acts as the Acyl-ester intermediate.

The protein belongs to the amidase family. GatA subfamily. Heterotrimer of A, B and C subunits.

It carries out the reaction L-glutamyl-tRNA(Gln) + L-glutamine + ATP + H2O = L-glutaminyl-tRNA(Gln) + L-glutamate + ADP + phosphate + H(+). Allows the formation of correctly charged Gln-tRNA(Gln) through the transamidation of misacylated Glu-tRNA(Gln) in organisms which lack glutaminyl-tRNA synthetase. The reaction takes place in the presence of glutamine and ATP through an activated gamma-phospho-Glu-tRNA(Gln). The protein is Glutamyl-tRNA(Gln) amidotransferase subunit A of Syntrophobacter fumaroxidans (strain DSM 10017 / MPOB).